A 224-amino-acid chain; its full sequence is UPF0111 protein TC_0063 (224 aa).

This sequence belongs to the UPF0111 family.

The polypeptide is UPF0111 protein TC_0063 (Chlamydia muridarum (strain MoPn / Nigg)).